A 340-amino-acid polypeptide reads, in one-letter code: Ornithine carbamoyltransferase (340 aa).

Carbamoyl phosphate-binding positions include 57–60 (STRT), glutamine 84, arginine 108, and 135–138 (HPTQ). L-ornithine is bound by residues asparagine 167, aspartate 231, and 235–236 (SM). Carbamoyl phosphate contacts are provided by residues 272–273 (CL) and arginine 317.

Belongs to the aspartate/ornithine carbamoyltransferase superfamily. OTCase family.

The protein localises to the cytoplasm. The enzyme catalyses carbamoyl phosphate + L-ornithine = L-citrulline + phosphate + H(+). It functions in the pathway amino-acid biosynthesis; L-arginine biosynthesis; L-arginine from L-ornithine and carbamoyl phosphate: step 1/3. Functionally, reversibly catalyzes the transfer of the carbamoyl group from carbamoyl phosphate (CP) to the N(epsilon) atom of ornithine (ORN) to produce L-citrulline. This chain is Ornithine carbamoyltransferase (argF), found in Lactiplantibacillus plantarum (strain ATCC BAA-793 / NCIMB 8826 / WCFS1) (Lactobacillus plantarum).